Consider the following 509-residue polypeptide: Putative cytochrome P450 CYP13A8 (509 aa).

Cys455 is a heme binding site.

Belongs to the cytochrome P450 family. The cofactor is heme.

Functionally, cytochromes P450 are a group of heme-thiolate monooxygenases. They oxidize a variety of structurally unrelated compounds, including steroids, fatty acids, and xenobiotics. The polypeptide is Putative cytochrome P450 CYP13A8 (cyp-13A8) (Caenorhabditis elegans).